The following is a 604-amino-acid chain: Integrin alpha-IIb (604 aa).

The FG-GAP repeat unit spans residues 1–61 (QVLDSPFPTG…ASVQLLVQDS (61 aa)). The Extracellular portion of the chain corresponds to 1-558 (QVLDSPFPTG…TQLLRALEER (558 aa)). Ca(2+) is bound by residues aspartate 22, aspartate 24, asparagine 26, tyrosine 28, and aspartate 30. 2 cysteine pairs are disulfide-bonded: cysteine 69–cysteine 80 and cysteine 86–cysteine 141. An N-linked (GlcNAc...) asparagine glycan is attached at asparagine 166. 4 disulfide bridges follow: cysteine 198–cysteine 204, cysteine 270–cysteine 283, cysteine 422–cysteine 486, and cysteine 476–cysteine 481. N-linked (GlcNAc...) asparagine glycosylation occurs at asparagine 276. Asparagine 527 carries N-linked (GlcNAc...) asparagine glycosylation. The chain crosses the membrane as a helical span at residues 559-584 (AIPIWWVLVGVLGGLLLLTILVLAMW). The Cytoplasmic segment spans residues 585 to 604 (KVGFFKRNRPPLEEDDEEGE). The GFFKR motif signature appears at 587-591 (GFFKR).

It belongs to the integrin alpha chain family. As to quaternary structure, heterodimer of an alpha and a beta subunit. The alpha subunit is composed of a heavy and a light chain linked by a disulfide bond. Alpha-IIb associates with beta-3. Directly interacts with RNF181. Interacts (via C-terminus cytoplasmic tail region) with CIB1; the interaction is direct and calcium-dependent. Interacts (via C-terminus cytoplasmic tail region) with CIB2, CIB3 and CIB4; the interactions are stabilized/increased in a calcium and magnesium-dependent manner. ITGA2B:ITGB3 interacts with PPIA/CYPA; the interaction is ROS and PPIase activity-dependent and is increased in the presence of thrombin. ITGA2B:ITGB3 interacts with SELP (via C-type lectin domain); the interaction mediates cell-cell interaction and adhesion.

Its subcellular location is the membrane. In terms of biological role, integrin alpha-IIb/beta-3 is a receptor for fibronectin, fibrinogen, plasminogen, prothrombin, thrombospondin and vitronectin. It recognizes the sequence R-G-D in a wide array of ligands. It recognizes the sequence H-H-L-G-G-G-A-K-Q-A-G-D-V in fibrinogen gamma chain. Following activation integrin alpha-IIb/beta-3 brings about platelet/platelet interaction through binding of soluble fibrinogen. This step leads to rapid platelet aggregation which physically plugs ruptured endothelial cell surface. The protein is Integrin alpha-IIb (ITGA2B) of Papio cynocephalus (Yellow baboon).